The following is a 172-amino-acid chain: Adenylate kinase isoenzyme 6 (172 aa).

5 residues coordinate ATP: glycine 13, glycine 15, lysine 16, threonine 17, and threonine 18. An NMPbind region spans residues 33–56; it reads NVGDLAREGQLYDGYDEEYGCPIL. The tract at residues 108-118 is LID; it reads TRGYNEKKLQD. Arginine 109 is a binding site for ATP.

This sequence belongs to the adenylate kinase family. AK6 subfamily. In terms of assembly, monomer and homodimer. Interacts with small ribosomal subunit protein uS11. Not a structural component of 43S pre-ribosomes, but transiently interacts with them by binding to uS11. Interacts with COIL (via C-terminus).

Its subcellular location is the cytoplasm. The protein resides in the nucleus. It is found in the nucleoplasm. The protein localises to the cajal body. The enzyme catalyses AMP + ATP = 2 ADP. The catalysed reaction is ATP + H2O = ADP + phosphate + H(+). Functionally, broad-specificity nucleoside monophosphate (NMP) kinase that catalyzes the reversible transfer of the terminal phosphate group between nucleoside triphosphates and monophosphates. Also has ATPase activity. Involved in the late cytoplasmic maturation steps of the 40S ribosomal particles, specifically 18S rRNA maturation. While NMP activity is not required for ribosome maturation, ATPase activity is. Associates transiently with small ribosomal subunit protein uS11. ATP hydrolysis breaks the interaction with uS11. May temporarily remove uS11 from the ribosome to enable a conformational change of the ribosomal RNA that is needed for the final maturation step of the small ribosomal subunit. Its NMP activity may have a role in nuclear energy homeostasis. May be involved in regulation of Cajal body (CB) formation. The protein is Adenylate kinase isoenzyme 6 of Mus musculus (Mouse).